The chain runs to 395 residues: RNA demethylase ALKBH5 (395 aa).

Disordered regions lie at residues 1–28 (MAAA…AGSR) and 47–83 (AAEP…EEEA). A2 is subject to N-acetylalanine. A Glycyl lysine isopeptide (Lys-Gly) (interchain with G-Cter in ubiquitin) cross-link involves residue K58. Basic and acidic residues predominate over residues 60-83 (KYQEDSDPERSDYEEHQLQKEEEA). Residues S65 and S70 each carry the phosphoserine modification. Residues 68–117 (ERSDYEEHQLQKEEEARKVKSGIRQIRLFSQDECSKIEARIDEVVSRAEK) are a coiled coil. Y72 is modified (phosphotyrosine). Residue K87 forms a Glycyl lysine isopeptide (Lys-Gly) (interchain with G-Cter in SUMO1) linkage. S88 is subject to Phosphoserine. Position 133 is an N6-acetyllysine (K133). The active site involves Y140. The 2-oxoglutarate site is built by N194, Y196, and H205. A disulfide bridge links C231 with C268. N6-acetyllysine is present on K236. 2-oxoglutarate contacts are provided by H267 and R278. Residues 294–395 (ETKSLSSSTL…PTRKVKMRRH (102 aa)) form a disordered region. Positions 296–306 (KSLSSSTLPPS) are enriched in low complexity. K322 participates in a covalent cross-link: Glycyl lysine isopeptide (Lys-Gly) (interchain with G-Cter in SUMO1). S326 is modified (phosphoserine). Residue K329 forms a Glycyl lysine isopeptide (Lys-Gly) (interchain with G-Cter in SUMO2) linkage. The span at 329–350 (KADPDAAHRPRILEMDKEENRR) shows a compositional bias: basic and acidic residues. R360 carries the omega-N-methylarginine modification. A phosphoserine mark is found at S362, S372, S375, and S385.

This sequence belongs to the alkB family. As to quaternary structure, monomer. Interacts with RBM33; promoting desumoylation by SENP1 and recruitment to N(6)-methyladenosine-containing mRNAs. Interacts (when acetylated by KAT8) with PSPC1; interaction facilitates recognition of N(6)-methyladenosine (m6A) mRNA. Fe(2+) is required as a cofactor. Phosphorylated at Ser-88 and Ser-326 in response to reactive oxygen species (ROS), promoting sumoylation and inactivation. Post-translationally, acetylated by KAT8 at Lys-236, promoting interaction with PSPC1, thereby facilitating recognition of N(6)-methyladenosine (m6A) mRNA by ALKBH5. Deacetylated at Lys-236 by HDAC7. In terms of processing, sumoylated at Lys-87 and Lys-322 by PIAS4 following phosphorylation at Ser-88 and Ser-326 in response to reactive oxygen species (ROS), inhibiting the RNA demethylase activity. Desumoylated by SENP1; relieving RNA demethylase inhibition, leading to N(6)-methyladenosine-containing mRNAs demethylation. Ubiquitinated at Lys-58 via 'Lys-48'-linked polyubiquitin chain, leading to its degradation by the proteasome. Deubiquitinated at Lys-58 by USP9X, promoting its stabilizazion. As to expression, widely expressed, with highest expression in testis. In testis, present in almost all testicular cell types except elongating and elongated spermatids (at protein level). Among spermatogenic cells, present at high level in spermatocytes; medium levels in spermatogonia and lower levels in round spermatids (at protein level).

It is found in the nucleus speckle. It carries out the reaction an N(6)-methyladenosine in mRNA + 2-oxoglutarate + O2 = an adenosine in mRNA + formaldehyde + succinate + CO2. RNA demethylase activity is inhibited following sumoylation. Inhibition is relieved following desumoylation. Inhibited by histone demethylase inhibitor IOX1. Dioxygenase that specifically demethylates N(6)-methyladenosine (m6A) RNA, the most prevalent internal modification of messenger RNA (mRNA) in higher eukaryotes. Demethylates RNA by oxidative demethylation, which requires molecular oxygen, alpha-ketoglutarate and iron. Demethylation of m6A mRNA affects mRNA processing, translation and export. Can also demethylate N(6)-methyladenosine in single-stranded DNA (in vitro). Required for the late meiotic and haploid phases of spermatogenesis by mediating m6A demethylation in spermatocytes and round spermatids: m6A demethylation of target transcripts is required for correct splicing and the production of longer 3'-UTR mRNAs in male germ cells. Involved in paraspeckle assembly, a nuclear membraneless organelle, by undergoing liquid-liquid phase separation. Paraspeckle assembly is coupled with m6A demethylation of RNAs, such as NEAT1 non-coding RNA. Also acts as a negative regulator of T-cell development: inhibits gamma-delta T-cell proliferation via demethylation of JAG1 and NOTCH2 transcripts. Inhibits regulatory T-cell (Treg) recruitment by mediating demethylation and destabilization of CCL28 mRNAs. In Mus musculus (Mouse), this protein is RNA demethylase ALKBH5.